A 440-amino-acid polypeptide reads, in one-letter code: COP9 signalosome complex subunit 5 (440 aa).

The 148-residue stretch at 71–218 (VLISKLSCEK…MGAFRTIESK (148 aa)) folds into the MPN domain. H164, H166, and D177 together coordinate Zn(2+). Positions 164-177 (HSHPGYDCWLSNID) match the JAMM motif motif. Positions 319 to 341 (TQRGDSTETSSFGSMFSGDNTSD) are enriched in polar residues. Disordered stretches follow at residues 319-343 (TQRG…SDVD) and 376-400 (SRST…HDEG).

The protein belongs to the peptidase M67A family. CSN5 subfamily. Component of a COP9 signalosome-like (CSN) complex, composed of at least RRI1/CSN5, CSN9, RRI2/CSN10, PCI8/CSN11, CSN12 and CSI1. Within this complex it probably interacts directly with CSN12. Also interacts with RPN5. A divalent metal cation is required as a cofactor.

Its subcellular location is the cytoplasm. The protein resides in the nucleus. Catalytic component of the COP9 signalosome (CSN) complex that acts as an regulator of the ubiquitin (Ubl) conjugation pathway by mediating the deneddylation of the cullin subunit of SCF-type E3 ubiquitin-protein ligase complexes. The CSN complex is involved in the regulation of the mating pheromone response. The protein is COP9 signalosome complex subunit 5 (RRI1) of Saccharomyces cerevisiae (strain YJM789) (Baker's yeast).